The chain runs to 191 residues: Chromobox protein homolog 5 (191 aa).

Phosphoserine is present on residues serine 11, serine 12, serine 13, and serine 14. Residues 20-78 form the Chromo 1 domain; it reads YVVEKVLDRRVVKGQVEYLLKWKGFSEEHNTWEPEKNLDCPELISEFMKKYKKMKEGEN. Residue lysine 32 forms a Glycyl lysine isopeptide (Lys-Gly) (interchain with G-Cter in SUMO2) linkage. The residue at position 40 (lysine 40) is an N6-acetyllysine. A disordered region spans residues 70–117; that stretch reads YKKMKEGENNKPREKSESNKRKSNFSNSADDIKSKKKREQSNDIARGF. The segment covering 73 to 89 has biased composition (basic and acidic residues); that stretch reads MKEGENNKPREKSESNK. A Glycyl lysine isopeptide (Lys-Gly) (interchain with G-Cter in SUMO2) cross-link involves residue lysine 91. Phosphoserine occurs at positions 92, 95, and 97. Residues lysine 102, lysine 106, lysine 154, and lysine 184 each participate in a glycyl lysine isopeptide (Lys-Gly) (interchain with G-Cter in SUMO2) cross-link. The Chromo 2; shadow subtype domain maps to 121-179; that stretch reads LEPEKIIGATDSCGDLMFLMKWKDTDEADLVLAKEANVKCPQIVIAFYEERLTWHAYPE.

In terms of assembly, homodimer. Interacts with histone H3 methylated at 'Lys-9'. Interacts (via Chromo 2; shadow subtype domain) with the MIS12 complex subunit NSL1; the interaction is direct, involves dimeric CBX5, and occurs during interphase. Interacts with POGZ; POGZ and PXVXL motif-containing proteins such as INCENP and TRIM28 compete for interaction with CBX5. Interacts with LRIF1 (via PxVxL motif). Interacts with INCENP. Interacts with TRIM24. Interacts (via the chromoshadow domain) with ATRX; the interaction is direct. Interacts (via the chromoshadow domain) with CHAF1A; the interaction is direct. Interacts (via the chromoshadow domain) with LBR; the interaction is direct. Interacts (via the chromoshadow domain) with NIPBL; the interaction is direct. Interacts (via the chromoshadow domain) with SP100; the interaction is direct. Interacts (via the chromoshadow domain) with STAM2; the interaction is direct. Interacts (via the chromoshadow domain) with TRIM28; the interaction is direct. Interacts (via the chromoshadow domain) with CBX3; the interaction is direct. Interacts with PRR14 (via N-terminus). Interacts with RRP1B. Interacts with HNRNPU (via C-terminus); this interaction is, at least in part, RNA-dependent. Interacts with ZNF263; recruited to the SIX3 promoter along with other proteins involved in chromatin modification and transcriptional corepression where it contributes to transcriptional repression. Interacts with AURKB during mitosis. Interacts with CHAMP1. Interacts with BAHD1. Interacts with HP1BP3. Interacts with CHD3. Interacts with CHD4. Interacts with SMYD5. Interacts with KMT5B. Interacts with KMT5C. As to quaternary structure, (Microbial infection) Interacts with JC virus agnoprotein; this interaction induces the dissociation of CBX5 from LBR, resulting in destabilization of the nuclear envelope. Phosphorylation of HP1 and LBR may be responsible for some of the alterations in chromatin organization and nuclear structure which occur at various times during the cell cycle. Phosphorylated during interphase and possibly hyper-phosphorylated during mitosis. In terms of processing, ubiquitinated.

Its subcellular location is the nucleus. The protein localises to the chromosome. The protein resides in the centromere. Component of heterochromatin that recognizes and binds histone H3 tails methylated at 'Lys-9' (H3K9me), leading to epigenetic repression. In contrast, it is excluded from chromatin when 'Tyr-41' of histone H3 is phosphorylated (H3Y41ph). May contribute to the association of heterochromatin with the inner nuclear membrane by interactions with the lamin-B receptor (LBR). Involved in the formation of kinetochore through interaction with the MIS12 complex subunit NSL1. Required for the formation of the inner centromere. The polypeptide is Chromobox protein homolog 5 (CBX5) (Homo sapiens (Human)).